The sequence spans 355 residues: NADH-quinone oxidoreductase subunit H (355 aa).

Transmembrane regions (helical) follow at residues 25-45 (VVRILVVSVVILLCVAYLILW), 91-111 (WLYLIAPIMTVVPAFAVWAVI), 126-146 (LLYAMAISSIGVYAVILAGWA), 170-190 (MGFALVLVLMTAGSLNLSEIV), 205-225 (FLSWNWLPLLPAFVVYFISGI), 253-273 (MAFALFFLAEYINMIVISALA), 290-310 (FIPGIFWLVLKVFALLSVFIW), and 330-350 (VFLPVTVIWVVVVGCWMMSPL).

It belongs to the complex I subunit 1 family. As to quaternary structure, NDH-1 is composed of 14 different subunits. Subunits NuoA, H, J, K, L, M, N constitute the membrane sector of the complex.

The protein localises to the cell inner membrane. It carries out the reaction a quinone + NADH + 5 H(+)(in) = a quinol + NAD(+) + 4 H(+)(out). In terms of biological role, NDH-1 shuttles electrons from NADH, via FMN and iron-sulfur (Fe-S) centers, to quinones in the respiratory chain. The immediate electron acceptor for the enzyme in this species is believed to be ubiquinone. Couples the redox reaction to proton translocation (for every two electrons transferred, four hydrogen ions are translocated across the cytoplasmic membrane), and thus conserves the redox energy in a proton gradient. This subunit may bind ubiquinone. This chain is NADH-quinone oxidoreductase subunit H, found in Burkholderia cenocepacia (strain ATCC BAA-245 / DSM 16553 / LMG 16656 / NCTC 13227 / J2315 / CF5610) (Burkholderia cepacia (strain J2315)).